The chain runs to 48 residues: Large ribosomal subunit protein bL32c (48 aa).

Belongs to the bacterial ribosomal protein bL32 family.

The protein localises to the plastid. Its subcellular location is the chloroplast. The chain is Large ribosomal subunit protein bL32c (rpl32) from Vicia faba (Broad bean).